We begin with the raw amino-acid sequence, 160 residues long: SsrA-binding protein (160 aa).

The interval 132–160 is disordered; sequence KEFDKRDTMRERDSNRELQRAVRNKGKEE.

The protein belongs to the SmpB family.

It is found in the cytoplasm. In terms of biological role, required for rescue of stalled ribosomes mediated by trans-translation. Binds to transfer-messenger RNA (tmRNA), required for stable association of tmRNA with ribosomes. tmRNA and SmpB together mimic tRNA shape, replacing the anticodon stem-loop with SmpB. tmRNA is encoded by the ssrA gene; the 2 termini fold to resemble tRNA(Ala) and it encodes a 'tag peptide', a short internal open reading frame. During trans-translation Ala-aminoacylated tmRNA acts like a tRNA, entering the A-site of stalled ribosomes, displacing the stalled mRNA. The ribosome then switches to translate the ORF on the tmRNA; the nascent peptide is terminated with the 'tag peptide' encoded by the tmRNA and targeted for degradation. The ribosome is freed to recommence translation, which seems to be the essential function of trans-translation. In Pseudomonas putida (strain ATCC 47054 / DSM 6125 / CFBP 8728 / NCIMB 11950 / KT2440), this protein is SsrA-binding protein.